The following is a 4462-amino-acid chain: Dynein axonemal heavy chain 17 (4462 aa).

The tract at residues 1–1808 (MTMAPDVRLE…FANICDAQIQ (1808 aa)) is stem. 2 TPR repeats span residues 1019–1052 (TWTD…VSKC) and 1702–1736 (IWWT…QLNV). AAA stretches follow at residues 1809-2030 (YSYE…VLVV), 2090-2311 (KIIK…FGFK), 2417-2665 (ELDP…IFQG), and 2763-3012 (SYNE…ERRY). ATP is bound by residues 1847-1854 (GPAGTGKT), 2128-2135 (GNAGSGKS), 2455-2462 (GNAGTGKS), and 2801-2808 (GVGGSGKQ). Coiled coils occupy residues 3027 to 3086 (YQNL…LIQV) and 3257 to 3309 (DVAP…EKIK). The segment at 3027–3313 (YQNLLAKKRT…TAEKIKCQQE (287 aa)) is stalk. AAA regions lie at residues 3405–3632 (LTDD…EIEE) and 3842–4068 (IKNF…VLYN). One copy of the TPR 3 repeat lies at 4147–4182 (PESPYLYGLHPNAEIGFLTVTSEKLFRTVLEMQPKE).

Belongs to the dynein heavy chain family. Consists of at least two heavy chains and a number of intermediate and light chains. In terms of tissue distribution, expressed in testis. Expressed in spermatozoa (at protein level). Not detected in airway epithelial cells (at protein level).

The protein localises to the cytoplasm. Its subcellular location is the cytoskeleton. It localises to the flagellum axoneme. Force generating protein component of the outer dynein arms (ODAs) in the sperm flagellum. Produces force towards the minus ends of microtubules. Dynein has ATPase activity; the force-producing power stroke is thought to occur on release of ADP. Plays a major role in sperm motility, implicated in sperm flagellar assembly and beating. The sequence is that of Dynein axonemal heavy chain 17 from Homo sapiens (Human).